A 619-amino-acid polypeptide reads, in one-letter code: Chaperone protein DnaK (619 aa).

The residue at position 175 (threonine 175) is a Phosphothreonine; by autocatalysis. Positions 578–619 are disordered; that stretch reads NGGAQGEGFDPNNMGGANAGTGAANSNDDNVVDADFEVQDDK. The span at 589 to 606 shows a compositional bias: low complexity; sequence NNMGGANAGTGAANSNDD. Over residues 607–619 the composition is skewed to acidic residues; it reads NVVDADFEVQDDK.

Belongs to the heat shock protein 70 family.

Acts as a chaperone. This is Chaperone protein DnaK from Clostridium perfringens (strain SM101 / Type A).